Here is a 690-residue protein sequence, read N- to C-terminus: Secreted LysM effector Vd5LysM (690 aa).

N-linked (GlcNAc...) asparagine glycosylation is found at N4 and N69. LysM domains are found at residues 203 to 248, 253 to 301, and 341 to 387; these read TQYT…SLCI, DTVT…TLCI, and RWYN…SYCV. N-linked (GlcNAc...) asparagine glycosylation is found at N260, N295, N375, N410, N423, and N492. The tract at residues 523–546 is disordered; the sequence is PATATTGDGGPTPPAPTHSGQPQD. Positions 549-596 constitute a LysM 4 domain; the sequence is TWHVVSSGDSCQSVADDAGISRDQFHDWNPAVGRDCSTNFWLGQAYCV. Positions 606–619 are enriched in low complexity; it reads STVASSTTSSVTPG. A disordered region spans residues 606–636; it reads STVASSTTSSVTPGPSKPEPPGPTHTGQPSD. A LysM 5 domain is found at 639-686; that stretch reads EWDVVETGDTCGSLAESNDISLSQFFDWNPAVSRDCVANFWIGQAYCI.

This sequence belongs to the secreted LysM effector family.

Might have a role in sequestration of chitin oligosaccharides (breakdown products of fungal cell walls that are released during invasion and act as triggers of host immunity) to dampen host defense. Does not play an important role during host colonization. The polypeptide is Secreted LysM effector Vd5LysM (Verticillium dahliae (strain VdLs.17 / ATCC MYA-4575 / FGSC 10137) (Verticillium wilt)).